The following is a 236-amino-acid chain: Purine nucleoside phosphorylase DeoD-type (236 aa).

A purine D-ribonucleoside is bound at residue His-5. Phosphate is bound by residues Gly-21, Arg-25, Arg-44, and 88-91 (RVGT). A purine D-ribonucleoside is bound by residues 180–182 (DME) and 204–205 (SD). Asp-205 functions as the Proton donor in the catalytic mechanism.

The protein belongs to the PNP/UDP phosphorylase family. In terms of assembly, homohexamer; trimer of homodimers.

The enzyme catalyses a purine D-ribonucleoside + phosphate = a purine nucleobase + alpha-D-ribose 1-phosphate. It catalyses the reaction a purine 2'-deoxy-D-ribonucleoside + phosphate = a purine nucleobase + 2-deoxy-alpha-D-ribose 1-phosphate. Catalyzes the reversible phosphorolytic breakdown of the N-glycosidic bond in the beta-(deoxy)ribonucleoside molecules, with the formation of the corresponding free purine bases and pentose-1-phosphate. In Buchnera aphidicola subsp. Schizaphis graminum (strain Sg), this protein is Purine nucleoside phosphorylase DeoD-type.